We begin with the raw amino-acid sequence, 250 residues long: 23S rRNA (guanosine-2'-O-)-methyltransferase RlmB (250 aa).

Positions 198, 218, and 227 each coordinate S-adenosyl-L-methionine.

The protein belongs to the class IV-like SAM-binding methyltransferase superfamily. RNA methyltransferase TrmH family. RlmB subfamily.

It localises to the cytoplasm. The enzyme catalyses guanosine(2251) in 23S rRNA + S-adenosyl-L-methionine = 2'-O-methylguanosine(2251) in 23S rRNA + S-adenosyl-L-homocysteine + H(+). Specifically methylates the ribose of guanosine 2251 in 23S rRNA. The polypeptide is 23S rRNA (guanosine-2'-O-)-methyltransferase RlmB (Pseudomonas syringae pv. tomato (strain ATCC BAA-871 / DC3000)).